A 198-amino-acid chain; its full sequence is Ribonuclease HII (198 aa).

Residues 14–198 enclose the RNase H type-2 domain; that stretch reads GVIAGVDEVG…RNFAPISRAL (185 aa). The a divalent metal cation site is built by Asp20, Glu21, and Asp112.

This sequence belongs to the RNase HII family. Requires Mn(2+) as cofactor. The cofactor is Mg(2+).

It is found in the cytoplasm. It carries out the reaction Endonucleolytic cleavage to 5'-phosphomonoester.. Functionally, endonuclease that specifically degrades the RNA of RNA-DNA hybrids. This chain is Ribonuclease HII, found in Wolbachia sp. subsp. Drosophila simulans (strain wRi).